Consider the following 62-residue polypeptide: Large ribosomal subunit protein bL35 (62 aa).

The segment at 25–62 (EQAYRSHLSQNKTTKQKRQARKSVQMHSSDVKRFKALI) is disordered. A compositionally biased stretch (basic and acidic residues) spans 53 to 62 (SDVKRFKALI).

It belongs to the bacterial ribosomal protein bL35 family.

This is Large ribosomal subunit protein bL35 from Mycoplasmopsis fermentans (Mycoplasma fermentans).